The sequence spans 1011 residues: MMSDASDMLAAALEQMDGIIAGSKALEYSNGIFDCQSPTSPFMGSLRALHLVEDLRGLLEMMETDEKEGLRCQIPDSTAETLVEWLQSQMTNGHLPGNGDVYQERLARLENDKESLVLQVSVLTDQVEAQGEKIRDLEFCLEEHREKVNATEEMLQQELLSRTSLETQKLDLMAEISNLKLKLTAVEKDRLDYEDKFRDTEGLIQEINDLRLKVSEMDSERLQYEKKLKSTKSLMAKLSSMKIKVGQMQYEKQRMEQKWESLKDELASLKEQLEEKESEVKRLQEKLVCKMKGEGVEIVDRDIEVQKMKKAVESLMAANEEKDRKIEDLRQCLNRYKKMQDTVVLAQGKDGEYEELLNSSSISSLLDAQGFSDLEKSPSPTPVMGSPSCDPFNTSVPEEFHTTILQVSIPSLLPATVSMETSEKSKLTPKPETSFEENDGNIILGATVDTQLCDKLLTSSLQKSSSLGNLKKETSDGEKETIQKTSEDRAPAESRPFGTLPPRPPGQDTSMDDNPFGTRKVRSSFGRGFFKIKSNKRTASAPNLAETEKETAEHLDLAGASSRPKDSQRNSPFQIPPPSPDSKKKSRGIMKLFGKLRRSQSTTFNPDDMSEPEFKRGGTRATAGPRLGWSRDLGQSNSDLDMPFAKWTKEQVCNWLMEQGLGSYLNSGKHWIASGQTLLQASQQDLEKELGIKHSLHRKKLQLALQALGSEEETNHGKLDFNWVTRWLDDIGLPQYKTQFDEGRVDGRMLHYMTVDDLLSLKVVSVLHHLSIKRAIQVLRINNFEPNCLRRRPSDENTIAPSEVQKWTNHRVMEWLRSVDLAEYAPNLRGSGVHGGLMVLEPRFNVETMAQLLNIPPNKTLLRRHLATHFNLLIGAEAQHQKRDAMELPDYVLLTATAKVKPKKLAFSNFGNLRKKKQEDGEEYVCPMELGQASGSASKKGFKPGLDMRLYEEDDLDRLEQMEDSEGTVRQIGAFSEGINNLTHMLKEDDMFKDFAARSPSASITDEDSNV.

A Phosphoserine modification is found at Ser37. Phosphothreonine is present on Thr39. Ser40 is modified (phosphoserine). Residues 156-405 adopt a coiled-coil conformation; it reads QQELLSRTSL…VPEEFHTTIL (250 aa). Residue Lys322 is modified to N6-acetyllysine. 2 disordered regions span residues 420-439 and 463-634; these read ETSEKSKLTPKPETSFEEND and KSSS…RDLG. Residues Ser434 and Ser466 each carry the phosphoserine modification. Residues 470 to 492 are compositionally biased toward basic and acidic residues; the sequence is LKKETSDGEKETIQKTSEDRAPA. Residue Lys471 forms a Glycyl lysine isopeptide (Lys-Gly) (interchain with G-Cter in SUMO2) linkage. Residues Ser523 and Ser540 each carry the phosphoserine modification. Residues 546-556 show a composition bias toward basic and acidic residues; that stretch reads ETEKETAEHLD. Ser579 is subject to Phosphoserine. Residues 584–598 are compositionally biased toward basic residues; sequence KKSRGIMKLFGKLRR. Phosphoserine occurs at positions 601 and 636. 2 consecutive SAM domains span residues 647-711 and 719-782; these read WTKE…LGSE and LDFN…LRIN. A Phosphoserine modification is found at Ser794. The 73-residue stretch at 804-876 folds into the SAM 3 domain; sequence VQKWTNHRVM…ATHFNLLIGA (73 aa). Residues Ser999, Ser1001, and Ser1003 each carry the phosphoserine modification. Thr1005 carries the phosphothreonine modification.

The protein belongs to the liprin family. Liprin-beta subfamily. In terms of assembly, forms homodimers and heterodimers. Interacts with S100A4 in a Ca(2+)-dependent mode. Part of a cortical microtubule stabilization complex (CMSC) composed of KANK1, PPFIA1, PPFIBP1, ERC1/ELKS, PHLDB2/LL5beta, CLASPs, KIF21A and possibly additional interactors; within CMSCs KANK1 and PHLDB2/LL5beta seem to be the core components for recruiting microtubule-binding proteins KIF21A and CLASPs, whereas PPFIA1, PPFIBP1 and ERC1/ELKS serve as scaffolds for protein clustering. Interacts with KANK1 (via CC1 domain, residues 244-339). Widely expressed. Absent in liver.

Its subcellular location is the cytoplasm. It is found in the cell cortex. May regulate the disassembly of focal adhesions. Did not bind receptor-like tyrosine phosphatases type 2A. This is Liprin-beta-1 (PPFIBP1) from Homo sapiens (Human).